The following is a 1429-amino-acid chain: Nitric oxide synthase 1 (1429 aa).

The interaction with NOSIP stretch occupies residues 1–200; the sequence is MEENTFGVQQ…LQDIGEHDEL (200 aa). Residues 17–99 form the PDZ domain; the sequence is SVRLFKRKVG…ETHVVLILRG (83 aa). Disordered regions lie at residues 152 to 174, 214 to 255, and 271 to 298; these read VTGL…SVSQ, GSKA…DNDR, and NNPY…SRCP. A compositionally biased stretch (low complexity) spans 160 to 174; the sequence is QHAQGHGQGAGSVSQ. The tract at residues 163-240 is interaction with DYNLL1/PIN; that stretch reads QGHGQGAGSV…TGIQVDRDLD (78 aa). The span at 226–243 shows a compositional bias: basic and acidic residues; the sequence is AEMKDTGIQVDRDLDGKS. A Phosphoserine modification is found at serine 280. Residues 280 to 294 show a composition bias toward polar residues; the sequence is SPTSGKQSPTKNGSP. A (6R)-L-erythro-5,6,7,8-tetrahydrobiopterin-binding site is contributed by serine 334. Residue cysteine 415 participates in heme b binding. L-arginine-binding residues include glutamine 478, tryptophan 587, tyrosine 588, and glutamate 592. 3 residues coordinate (6R)-L-erythro-5,6,7,8-tetrahydrobiopterin: valine 677, tryptophan 678, and phenylalanine 691. Tyrosine 706 is a heme b binding site. The interval 725 to 745 is calmodulin-binding; that stretch reads KRRAIGFKKLAEAVKFSAKLM. In terms of domain architecture, Flavodoxin-like spans 755 to 935; the sequence is ATILYATETG…AFRTWAKKVF (181 aa). Residues threonine 761, glutamate 762, threonine 763, lysine 765, serine 766, serine 807, threonine 808, and glycine 812 each contribute to the FMN site. A phosphoserine mark is found at serine 847, serine 857, and serine 858. 5 residues coordinate FMN: serine 886, histidine 891, cysteine 893, glutamate 919, and glutamine 923. In terms of domain architecture, FAD-binding FR-type spans 990 to 1237; it reads KRVSAARLLS…VRGAPSFHLP (248 aa). Residue arginine 1010 participates in NADP(+) binding. FAD contacts are provided by histidine 1032, arginine 1173, tyrosine 1174, tyrosine 1175, serine 1176, threonine 1191, and alanine 1193. Serine 1196 contributes to the NADP(+) binding site. FAD contacts are provided by tyrosine 1197, valine 1210, cysteine 1211, and serine 1212. NADP(+) is bound by residues threonine 1251, arginine 1284, serine 1313, arginine 1314, lysine 1320, tyrosine 1322, glutamine 1324, aspartate 1357, threonine 1398, and arginine 1400.

The protein belongs to the NOS family. In terms of assembly, homodimer. Interacts with DLG4 (via N-terminal tandem pair of PDZ domains); the interaction possibly being prevented by the association between NOS1 and CAPON. Forms a ternary complex with CAPON and RASD1. Forms a ternary complex with CAPON and SYN1. Interacts with ZDHHC23. Interacts with NOSIP; which may impair its synaptic location. Interacts with HTR4. Interacts with SLC6A4. Interacts with VAC14. Forms a complex with ASL, ASS1 and SLC7A1; the complex regulates cell-autonomous L-arginine synthesis and citrulline recycling while channeling extracellular L-arginine to nitric oxide synthesis pathway. Interacts with DMD; localizes NOS1 to sarcolemma in muscle cells. Interacts with DYNLL1; inhibits the nitric oxide synthase activity. Heme b is required as a cofactor. Requires FAD as cofactor. The cofactor is FMN. (6R)-L-erythro-5,6,7,8-tetrahydrobiopterin serves as cofactor. Post-translationally, ubiquitinated; mediated by STUB1/CHIP in the presence of Hsp70 and Hsp40 (in vitro). Isoform N-NOS-1 is expressed in brain and colorectum. Found in the Auerbach's plexus of the enteric nervous system. Isoform PNNOS is expressed in the penis, urethra, prostate, and skeletal muscle, and coexists with the cerebellar nnos in the pelvic plexus, bladder and liver, and is detectable in the cerebellum.

It is found in the cell membrane. The protein localises to the sarcolemma. Its subcellular location is the cell projection. The protein resides in the dendritic spine. The enzyme catalyses 2 L-arginine + 3 NADPH + 4 O2 + H(+) = 2 L-citrulline + 2 nitric oxide + 3 NADP(+) + 4 H2O. Its activity is regulated as follows. Stimulated by calcium/calmodulin. Inhibited by DYNLL1 that prevents the dimerization of the protein. Inhibited by NOSIP. Functionally, produces nitric oxide (NO) which is a messenger molecule with diverse functions throughout the body. In the brain and peripheral nervous system, NO displays many properties of a neurotransmitter. Inhibitory transmitter for non-adrenergic and non-cholinergic nerves in the colorectum. Probably has nitrosylase activity and mediates cysteine S-nitrosylation of cytoplasmic target proteins such SRR. Inhibitory transmitter for non-adrenergic and non-cholinergic nerves in the colorectum. This chain is Nitric oxide synthase 1, found in Rattus norvegicus (Rat).